The sequence spans 218 residues: Glutathione S-transferase class-mu 26 kDa isozyme 51 (218 aa).

One can recognise a GST N-terminal domain in the interval 2-83 (PAKLGYWKIR…YIADKHGMLG (82 aa)). Glutathione contacts are provided by residues 7–8 (YW), 41–45 (WFGDK), 54–55 (NL), and 67–68 (QS). Residues 85-203 (TPEERARISM…ESEKFIKWPL (119 aa)) form the GST C-terminal domain. Residue Y111 coordinates substrate.

Belongs to the GST superfamily. Mu family. As to quaternary structure, homodimer.

It is found in the cytoplasm. The catalysed reaction is RX + glutathione = an S-substituted glutathione + a halide anion + H(+). Conjugation of reduced glutathione to a wide number of exogenous and endogenous hydrophobic electrophiles. Its function is as follows. GST isoenzymes appear to play a central role in the parasite detoxification system. Other functions are also suspected including a role in increasing the solubility of haematin in the parasite gut. The chain is Glutathione S-transferase class-mu 26 kDa isozyme 51 from Fasciola hepatica (Liver fluke).